The sequence spans 206 residues: Small ribosomal subunit protein uS4 (206 aa).

The S4 RNA-binding domain maps to 96–156 (CRLDNVVYRM…EKSSNQLRIV (61 aa)).

The protein belongs to the universal ribosomal protein uS4 family. As to quaternary structure, part of the 30S ribosomal subunit. Contacts protein S5. The interaction surface between S4 and S5 is involved in control of translational fidelity.

Functionally, one of the primary rRNA binding proteins, it binds directly to 16S rRNA where it nucleates assembly of the body of the 30S subunit. Its function is as follows. With S5 and S12 plays an important role in translational accuracy. This is Small ribosomal subunit protein uS4 from Pseudomonas putida (strain W619).